The chain runs to 299 residues: Formamidopyrimidine-DNA glycosylase (299 aa).

P2 acts as the Schiff-base intermediate with DNA in catalysis. Residue E3 is the Proton donor of the active site. K58 (proton donor; for beta-elimination activity) is an active-site residue. DNA contacts are provided by H106, R125, and K168. The FPG-type zinc finger occupies 259–295 (RVYDRVGHACPTKGCTGRVGRIVQGGRSTFFCETCQV). R285 acts as the Proton donor; for delta-elimination activity in catalysis.

It belongs to the FPG family. As to quaternary structure, monomer. Requires Zn(2+) as cofactor.

The enzyme catalyses Hydrolysis of DNA containing ring-opened 7-methylguanine residues, releasing 2,6-diamino-4-hydroxy-5-(N-methyl)formamidopyrimidine.. It catalyses the reaction 2'-deoxyribonucleotide-(2'-deoxyribose 5'-phosphate)-2'-deoxyribonucleotide-DNA = a 3'-end 2'-deoxyribonucleotide-(2,3-dehydro-2,3-deoxyribose 5'-phosphate)-DNA + a 5'-end 5'-phospho-2'-deoxyribonucleoside-DNA + H(+). In terms of biological role, involved in base excision repair of DNA damaged by oxidation or by mutagenic agents. Acts as a DNA glycosylase that recognizes and removes damaged bases. Has a preference for oxidized purines, such as 7,8-dihydro-8-oxoguanine (8-oxoG). Has AP (apurinic/apyrimidinic) lyase activity and introduces nicks in the DNA strand. Cleaves the DNA backbone by beta-delta elimination to generate a single-strand break at the site of the removed base with both 3'- and 5'-phosphates. In Methylorubrum extorquens (strain CM4 / NCIMB 13688) (Methylobacterium extorquens), this protein is Formamidopyrimidine-DNA glycosylase.